Here is a 222-residue protein sequence, read N- to C-terminus: Protein-L-isoaspartate O-methyltransferase (222 aa).

S67 is an active-site residue.

Belongs to the methyltransferase superfamily. L-isoaspartyl/D-aspartyl protein methyltransferase family.

It localises to the cytoplasm. It catalyses the reaction [protein]-L-isoaspartate + S-adenosyl-L-methionine = [protein]-L-isoaspartate alpha-methyl ester + S-adenosyl-L-homocysteine. Catalyzes the methyl esterification of L-isoaspartyl residues in peptides and proteins that result from spontaneous decomposition of normal L-aspartyl and L-asparaginyl residues. It plays a role in the repair and/or degradation of damaged proteins. The protein is Protein-L-isoaspartate O-methyltransferase of Parvibaculum lavamentivorans (strain DS-1 / DSM 13023 / NCIMB 13966).